A 955-amino-acid polypeptide reads, in one-letter code: Glutamyl aminopeptidase (955 aa).

The Cytoplasmic portion of the chain corresponds to 1-17; it reads MDIEDKTSKMHCMKGKH. A helical; Signal-anchor for type II membrane protein membrane pass occupies residues 18–38; it reads VVIICGVVIAVGLILGLGLGL. Topologically, residues 39–955 are extracellular; the sequence is GLDTKACNPP…LENSEHSNFA (917 aa). Residues Asn118 and Asn192 are each glycosylated (N-linked (GlcNAc...) asparagine). Position 218 (Glu218) interacts with substrate. Residues Asn319 and Asn335 are each glycosylated (N-linked (GlcNAc...) asparagine). 352–356 contributes to the substrate binding site; the sequence is GAMEN. His388 contacts Zn(2+). Glu389 (proton acceptor) is an active-site residue. Residues His392 and Glu411 each contribute to the Zn(2+) site. 8 N-linked (GlcNAc...) asparagine glycosylation sites follow: Asn458, Asn547, Asn584, Asn592, Asn674, Asn759, Asn823, and Asn836. Arg882 contacts substrate.

Belongs to the peptidase M1 family. In terms of assembly, homodimer; disulfide-linked. Zn(2+) serves as cofactor. In terms of processing, N-glycosylated. Glycosylation counts for an increased mass of about 32% of the protein mass (about 48 kDa).

The protein resides in the cell membrane. The enzyme catalyses Release of N-terminal glutamate (and to a lesser extent aspartate) from a peptide.. Substrate specificity is modulated by calcium which enhances the enzymatic activity for cleavage of acidic residues while reducing its activity with neutral and basic residues. Hydrolytic activity is inhibited by the aminopeptidase inhibitor (Leu and acidic inhibitor) amastatin, but not by bestatin (aminopeptidase inhibitor Leu inhibitor), leupeptin, pepstatin A and PMSF. Its hydrolytic activity is also strongly reduced by zinc ions, with a complete inhibition at 0.5 mM, and moderately inhibited by cobalt and copper ions. Functionally, venom protein that cleaves N-terminal acidic residues from peptides with high potency in presence of calcium. It may have several roles in venom including alteration of blood pressure by cleaving circulating angiotensin-2, general degradation of host tissue, increase of permeability to other venom components, and/or processing of other toxins in the venom. The polypeptide is Glutamyl aminopeptidase (Bitis rhinoceros (West African gaboon viper)).